The chain runs to 770 residues: MDLEAAHGAAAAPGKRRRRARESWGASLLLAYQSLGVVYGDVATSPLYVYKSAFAGDDIQHSAGNEEIYGVLSFVFWTLTLISLVKYVLIVLRADDGGEGGTFALYSLICRHVRAGLLPGGAGDELAVGGRRDARAMSRLRAMLERYRVLQRLLLLFALLGTCMVIGDGVLTPAVSVYSAVSGLELSMEHEHHKYVQLPVTCAILIGLFALQHYGTHRVGFIFAPIVCVWLLCISAIGVYNIVHWNHHVYRALSPYYMYQFLKKTQTGGWMSLGGILLCVTGSEAMYADLGHFSQSSIKIAFMSVVYPALVLAYMGQAAYISQHHSFENAYHIGFYVSVPEKLRWPVLVIAILAAVVGSQAVITGTFSIIKQCSSLSCFPGVKIVHTSSTVHGQIYIPEINWILMILCLAVTLGFRNTKHLANAQGLAVITVMLVTTCLMSLVIVLCWNKSIFLALGFLIFFGTIEVLYFSASLVKFHEGAWVPITLSFIFMIVMCVWHYGTIKKYEFDFQNKVSVNWLLNLGPSLGIVRVRGIGLIHTELVSGIPAIFSHFVTNLPAFHQVLVFLCVKSVPVPHVQPEERFLVGRIGPKEYRLYRVIVRYGYRDVQKDDIEFEKDLVSSIAEFIRSGDSHHNGVLEDTDKSCEKLSSISNGIPLWMEDGEVDASASPHKETDTQIISPNRKKARFVLPKNAQVDSEVRRELQELMDAREAGMSFILGHSYMKAKSGSSFIKRIVINFFYEFLRRNSRGPSYAATIPHASTLEVGMVYQV.

The Cytoplasmic portion of the chain corresponds to 1–23 (MDLEAAHGAAAAPGKRRRRARES). Residues 24-44 (WGASLLLAYQSLGVVYGDVAT) traverse the membrane as a helical segment. The Extracellular portion of the chain corresponds to 45-70 (SPLYVYKSAFAGDDIQHSAGNEEIYG). Residues 71–91 (VLSFVFWTLTLISLVKYVLIV) traverse the membrane as a helical segment. Topologically, residues 92–152 (LRADDGGEGG…MLERYRVLQR (61 aa)) are cytoplasmic. The chain crosses the membrane as a helical span at residues 153-173 (LLLLFALLGTCMVIGDGVLTP). Residues 174–194 (AVSVYSAVSGLELSMEHEHHK) are Extracellular-facing. A helical membrane pass occupies residues 195 to 215 (YVQLPVTCAILIGLFALQHYG). Residues 216-218 (THR) are Cytoplasmic-facing. Residues 219–239 (VGFIFAPIVCVWLLCISAIGV) traverse the membrane as a helical segment. At 240–267 (YNIVHWNHHVYRALSPYYMYQFLKKTQT) the chain is on the extracellular side. A helical transmembrane segment spans residues 268–288 (GGWMSLGGILLCVTGSEAMYA). Topologically, residues 289 to 299 (DLGHFSQSSIK) are cytoplasmic. The helical transmembrane segment at 300–320 (IAFMSVVYPALVLAYMGQAAY) threads the bilayer. The Extracellular portion of the chain corresponds to 321-346 (ISQHHSFENAYHIGFYVSVPEKLRWP). A helical membrane pass occupies residues 347 to 367 (VLVIAILAAVVGSQAVITGTF). At 368-394 (SIIKQCSSLSCFPGVKIVHTSSTVHGQ) the chain is on the cytoplasmic side. Residues 395–415 (IYIPEINWILMILCLAVTLGF) traverse the membrane as a helical segment. Residues 416-425 (RNTKHLANAQ) are Extracellular-facing. A helical transmembrane segment spans residues 426–446 (GLAVITVMLVTTCLMSLVIVL). Residues 447 to 451 (CWNKS) are Cytoplasmic-facing. Residues 452 to 472 (IFLALGFLIFFGTIEVLYFSA) traverse the membrane as a helical segment. Topologically, residues 473-479 (SLVKFHE) are extracellular. Residues 480-500 (GAWVPITLSFIFMIVMCVWHY) traverse the membrane as a helical segment. The Cytoplasmic segment spans residues 501–770 (GTIKKYEFDF…TLEVGMVYQV (270 aa)).

Belongs to the HAK/KUP transporter (TC 2.A.72.3) family.

The protein localises to the membrane. In terms of biological role, high-affinity potassium transporter. The chain is Potassium transporter 25 (HAK25) from Oryza sativa subsp. japonica (Rice).